A 264-amino-acid polypeptide reads, in one-letter code: tRNA pseudouridine synthase A (264 aa).

Catalysis depends on Asp-51, which acts as the Nucleophile. Tyr-109 is a substrate binding site.

Belongs to the tRNA pseudouridine synthase TruA family. As to quaternary structure, homodimer.

The enzyme catalyses uridine(38/39/40) in tRNA = pseudouridine(38/39/40) in tRNA. In terms of biological role, formation of pseudouridine at positions 38, 39 and 40 in the anticodon stem and loop of transfer RNAs. This is tRNA pseudouridine synthase A from Yersinia pseudotuberculosis serotype O:1b (strain IP 31758).